Reading from the N-terminus, the 240-residue chain is Expansin-A20 (240 aa).

An N-terminal signal peptide occupies residues 1–21 (MGNILLQLLAVVALCIAPARS). The Expansin-like EG45 domain occupies 41-145 (GGACGYGNLY…QQVKCWRYGG (105 aa)). Residues asparagine 107 and asparagine 207 are each glycosylated (N-linked (GlcNAc...) asparagine). One can recognise an Expansin-like CBD domain in the interval 155–234 (YFELVLVTNM…GWSFGQTFST (80 aa)).

This sequence belongs to the expansin family. Expansin A subfamily.

It is found in the secreted. It localises to the cell wall. The protein resides in the membrane. Functionally, may cause loosening and extension of plant cell walls by disrupting non-covalent bonding between cellulose microfibrils and matrix glucans. No enzymatic activity has been found. May be required for rapid internodal elongation in deepwater rice during submergence. This is Expansin-A20 (EXPA20) from Oryza sativa subsp. japonica (Rice).